Reading from the N-terminus, the 122-residue chain is Large ribosomal subunit protein uL14c (122 aa).

This sequence belongs to the universal ribosomal protein uL14 family. Part of the 50S ribosomal subunit.

The protein localises to the plastid. Functionally, binds to 23S rRNA. In Cuscuta obtusiflora (Peruvian dodder), this protein is Large ribosomal subunit protein uL14c.